The primary structure comprises 355 residues: D-alanine--D-alanine ligase (355 aa).

The region spanning 143 to 350 is the ATP-grasp domain; that stretch reads KTIFSNLKIP…IEQLVAKLVD (208 aa). 178–233 contacts ATP; sequence LKKLNFPFFVKPSNSGSSLGISKVINESEILQSLEKAQKIDSRILVEEGLEVREIE. Residues D303, E317, and N319 each contribute to the Mg(2+) site.

The protein belongs to the D-alanine--D-alanine ligase family. Mg(2+) serves as cofactor. Mn(2+) is required as a cofactor.

Its subcellular location is the cytoplasm. It carries out the reaction 2 D-alanine + ATP = D-alanyl-D-alanine + ADP + phosphate + H(+). It participates in cell wall biogenesis; peptidoglycan biosynthesis. In terms of biological role, cell wall formation. This is D-alanine--D-alanine ligase from Prochlorococcus marinus (strain MIT 9215).